Here is a 312-residue protein sequence, read N- to C-terminus: MELLFLGTGSGVPSKGRNVSAVALQLLEERGATWLFDCGEATQHQILHTSIRPRRIERIFITHLHGDHIFGLPGLLGSRSFQGGETPLFVYGPAGIRSFVETALAVSGTRLKYELYIEEFTEGVIFEDEQFIVTAKLLDHGLPSYGFRIVEKDLPGTLLVDELRALGVKPGPIYQQIKRGEVVTLDDGTVIDGRKFVAPPKKGRMIAIMGDTRYCEASVELAEGVDVLVHEATFSANEAHLARDYYHSTTVQAAEVAKRARAKQLILTHISSRYQGEMCDQLVEEAKTIFPNVALASDFSSFSIIRKGHDER.

Residues His-63, His-65, Asp-67, His-68, His-140, Asp-211, and His-269 each coordinate Zn(2+). The Proton acceptor role is filled by Asp-67.

It belongs to the RNase Z family. As to quaternary structure, homodimer. Requires Zn(2+) as cofactor.

It carries out the reaction Endonucleolytic cleavage of RNA, removing extra 3' nucleotides from tRNA precursor, generating 3' termini of tRNAs. A 3'-hydroxy group is left at the tRNA terminus and a 5'-phosphoryl group is left at the trailer molecule.. In terms of biological role, zinc phosphodiesterase, which displays some tRNA 3'-processing endonuclease activity. Probably involved in tRNA maturation, by removing a 3'-trailer from precursor tRNA. The protein is Ribonuclease Z of Anoxybacillus flavithermus (strain DSM 21510 / WK1).